A 145-amino-acid chain; its full sequence is MKATLRAPASRASAVRPVASLKAAAQRVASVAGVSVASLALTLAAHADATVKLGADSGALEFVPKTLTIKSGETVNFVNNAGFPHNIVFDEDAIPSGVNADAISRDDYLNAPGETYSVKLTAAGEYGYYCEPHQGAGMVGKIIVQ.

A chloroplast-targeting transit peptide spans 1–47 (MKATLRAPASRASAVRPVASLKAAAQRVASVAGVSVASLALTLAAHA). In terms of domain architecture, Plastocyanin-like spans 48-145 (DATVKLGADS…AGMVGKIIVQ (98 aa)). Positions 85, 130, 133, and 138 each coordinate Cu cation.

It belongs to the plastocyanin family. The cofactor is Cu(2+).

Its subcellular location is the plastid. The protein resides in the chloroplast thylakoid membrane. Functionally, participates in electron transfer between P700 and the cytochrome b6-f complex in photosystem I. This is Plastocyanin, chloroplastic (PETE) from Chlamydomonas reinhardtii (Chlamydomonas smithii).